Reading from the N-terminus, the 141-residue chain is Hemoglobin subunit alpha (141 aa).

A Globin domain is found at 1-141; the sequence is VLSPADKTNI…VSTVLTSKYR (141 aa). Ser-3 is subject to Phosphoserine. Position 7 is an N6-succinyllysine (Lys-7). Thr-8 carries the post-translational modification Phosphothreonine. An N6-succinyllysine modification is found at Lys-11. Residue Lys-16 is modified to N6-acetyllysine; alternate. Lys-16 is subject to N6-succinyllysine; alternate. Tyr-24 carries the post-translational modification Phosphotyrosine. A Phosphoserine modification is found at Ser-35. Lys-40 is modified (N6-succinyllysine). Ser-49 carries the post-translational modification Phosphoserine. His-58 provides a ligand contact to O2. Residue His-87 coordinates heme b. Ser-102 bears the Phosphoserine mark. Thr-108 carries the phosphothreonine modification. Ser-124 carries the phosphoserine modification. 2 positions are modified to phosphothreonine: Thr-134 and Thr-137. The residue at position 138 (Ser-138) is a Phosphoserine.

The protein belongs to the globin family. As to quaternary structure, heterotetramer of two alpha chains and two beta chains. In terms of tissue distribution, red blood cells.

Functionally, involved in oxygen transport from the lung to the various peripheral tissues. Its function is as follows. Hemopressin acts as an antagonist peptide of the cannabinoid receptor CNR1. Hemopressin-binding efficiently blocks cannabinoid receptor CNR1 and subsequent signaling. The sequence is that of Hemoglobin subunit alpha (HBA) from Vulpes vulpes (Red fox).